Here is an 847-residue protein sequence, read N- to C-terminus: Bifunctional protein argC, mitochondrial (847 aa).

Residues 100-331 (QIVLVKIGGG…PPSTSITITS (232 aa)) form an acetylglutamate kinase region. The 157-residue stretch at 352-508 (GEVMHSHESP…CLSQSSTYLS (157 aa)) folds into the N-acetyltransferase domain. The tract at residues 531–846 (FRVGLIGARG…LDELASIKNE (316 aa)) is N-acetyl-gamma-glutamyl-phosphate reductase. Cys665 is a catalytic residue.

It in the N-terminal section; belongs to the acetylglutamate kinase family. The protein in the C-terminal section; belongs to the NAGSA dehydrogenase family.

It is found in the mitochondrion. The catalysed reaction is N-acetyl-L-glutamate 5-semialdehyde + phosphate + NADP(+) = N-acetyl-L-glutamyl 5-phosphate + NADPH + H(+). It catalyses the reaction N-acetyl-L-glutamate + ATP = N-acetyl-L-glutamyl 5-phosphate + ADP. Its pathway is amino-acid biosynthesis; L-arginine biosynthesis; N(2)-acetyl-L-ornithine from L-glutamate: step 2/4. It participates in amino-acid biosynthesis; L-arginine biosynthesis; N(2)-acetyl-L-ornithine from L-glutamate: step 3/4. This Dictyostelium discoideum (Social amoeba) protein is Bifunctional protein argC, mitochondrial (argC).